Reading from the N-terminus, the 467-residue chain is Probable glutamate decarboxylase gamma (467 aa).

K278 carries the N6-(pyridoxal phosphate)lysine modification.

It belongs to the group II decarboxylase family. Pyridoxal 5'-phosphate is required as a cofactor.

It catalyses the reaction L-glutamate + H(+) = 4-aminobutanoate + CO2. This chain is Probable glutamate decarboxylase gamma, found in Listeria monocytogenes serovar 1/2a (strain ATCC BAA-679 / EGD-e).